Here is a 226-residue protein sequence, read N- to C-terminus: uncharacterized protein (226 aa).

It belongs to the IIV-6 350L family.

This is an uncharacterized protein from Invertebrate iridescent virus 3 (IIV-3).